The sequence spans 1015 residues: SPOC domain-containing protein 1 (1015 aa).

Disordered stretches follow at residues 73–97 (MVSP…SPVL), 118–159 (GFSL…EPGG), 213–320 (LYPE…PRLE), and 344–406 (AASS…MTPL). Over residues 304–320 (SQDHAEGASKKDFPRLE) the composition is skewed to basic and acidic residues. Over residues 373 to 382 (AHPTPCQSDP) the composition is skewed to polar residues. A compositionally biased stretch (basic and acidic residues) spans 388-397 (AEPHQQRAED). The TFIIS central domain occupies 410 to 530 (VRSTVVRAMQ…IIEQQQKELY (121 aa)). The tract at residues 643–685 (IQKAPGPAPASSPEVLKVGETPPKEPQDRLQMPAGLKNAPPSP) is disordered. Residues 688-791 (WEGSLDMFSI…VQQVKMVLLP (104 aa)) enclose the SPOC domain. 2 disordered regions span residues 858–906 (PEDR…PGWG) and 967–1015 (QSQD…EHEC). The segment covering 967-978 (QSQDSLPPSTVV) has biased composition (polar residues).

In terms of assembly, interacts with DNMT3A, DNMT3C and DNMT3L. Interacts with C19orf84 homolog. Interacts with SPIN1; promoting recruitment to transposons marked with histone H3 trimethylated at both 'Lys-4' and 'Lys-9' (H3K4me3K9me3).

The protein localises to the nucleus. The protein resides in the chromosome. Its function is as follows. Protein adapter that acts as an essential executor of PIWIL4-piRNA pathway directed transposon DNA methylation and silencing in the male embryonic germ cells. Recruited to young transposons, which are specifically marked with histone H3 trimethylated at both 'Lys-4' and 'Lys-9' (H3K4me3K9me3), via its association with SPIN1 chromatin reader, and associates with the de novo DNA methylation machinery and repressive chromatin remodeling complexes. Following this, PIWIL4 engages with nascent transposable element transcript to direct piRNA-directed DNA methylation. Not required for piRNA biosynthesis. The polypeptide is SPOC domain-containing protein 1 (Mus musculus (Mouse)).